A 449-amino-acid chain; its full sequence is Alginate biosynthesis transcriptional regulatory protein AlgB (449 aa).

Positions 10–124 (RILLVDDESA…QLRLAAAKQL (115 aa)) constitute a Response regulatory domain. Residue Asp59 is modified to 4-aspartylphosphate. In terms of domain architecture, Sigma-54 factor interaction spans 147 to 376 (LESHSPAMAA…LRNVIERASI (230 aa)). ATP is bound by residues 175-182 (GESGSGKG) and 238-247 (ADGGTLFLDE). The segment at residues 426–445 (LDQAAKTLGIDASTLYRKRK) is a DNA-binding region (H-T-H motif).

Phosphorylated by KinB.

It functions in the pathway glycan biosynthesis; alginate biosynthesis [regulation]. Its function is as follows. Member of the two-component regulatory system AlgB/KinB involved in regulation of alginate biosynthesis genes. Positive regulator of the alginate biosynthetic gene AlgD. In Pseudomonas aeruginosa (strain ATCC 15692 / DSM 22644 / CIP 104116 / JCM 14847 / LMG 12228 / 1C / PRS 101 / PAO1), this protein is Alginate biosynthesis transcriptional regulatory protein AlgB (algB).